We begin with the raw amino-acid sequence, 964 residues long: A-type ATP synthase subunit A (964 aa).

The DOD-type homing endonuclease domain occupies 392 to 518 (FLGYLMANGT…LSYLFAKLGI (127 aa)).

The protein belongs to the ATPase alpha/beta chains family. Has multiple subunits with at least A(3), B(3), C, D, E, F, H, I and proteolipid K(x). In terms of processing, this protein undergoes a protein self splicing that involves a post-translational excision of the VDE intervening region (intein) followed by peptide ligation.

The protein localises to the cell membrane. The enzyme catalyses ATP + H2O + 4 H(+)(in) = ADP + phosphate + 5 H(+)(out). In terms of biological role, component of the A-type ATP synthase that produces ATP from ADP in the presence of a proton gradient across the membrane. The A chain is the catalytic subunit. This Pyrococcus horikoshii (strain ATCC 700860 / DSM 12428 / JCM 9974 / NBRC 100139 / OT-3) protein is A-type ATP synthase subunit A.